Here is a 465-residue protein sequence, read N- to C-terminus: MSQGKVVQCIGAVVDVEFPRDQMPKVYDALILDEDSPTVEAGLTLEVQQQLGDGVVRTIAMGSSDGLSRGMKVKNTGSQIQVPVGHGTLGRIMDVLGRPIDEAGPIEADEKRSIHQKAPTFEELSPSVDLLETGIKVIDLVCPFAKGGKVGLFGGAGVGKTVNMMELINNIAKQHSGLSVFAGVGERTREGNDFYHEMKDSNVLDKVGMVFGQMNEPPGNRLRVALTGLTMAERFRDEGRDILFFVDNIYRYTLAGTEVSALLGRMPSAVGYQPTLAEEMGRLQERITSTKVGSITSIQAVYVPADDLTDPSPATTFLHLDSTVVLSRDIAALGIYPAVDPLDSTSRQLDPQIVGEEHYSVARAVQSTLQRYKELRDIIAILGMDELSPEDKLAVARARKIQRFLSQPFHVAEVFTGAPGKYVPLKDTIKGFKAIVNGEYDHLPEQAFYMVGSIEEAVEKAKTLN.

154–161 (GGAGVGKT) is an ATP binding site.

Belongs to the ATPase alpha/beta chains family. In terms of assembly, F-type ATPases have 2 components, CF(1) - the catalytic core - and CF(0) - the membrane proton channel. CF(1) has five subunits: alpha(3), beta(3), gamma(1), delta(1), epsilon(1). CF(0) has three main subunits: a(1), b(2) and c(9-12). The alpha and beta chains form an alternating ring which encloses part of the gamma chain. CF(1) is attached to CF(0) by a central stalk formed by the gamma and epsilon chains, while a peripheral stalk is formed by the delta and b chains.

The protein localises to the cell inner membrane. The catalysed reaction is ATP + H2O + 4 H(+)(in) = ADP + phosphate + 5 H(+)(out). Its function is as follows. Produces ATP from ADP in the presence of a proton gradient across the membrane. The catalytic sites are hosted primarily by the beta subunits. The protein is ATP synthase subunit beta of Methylobacillus flagellatus (strain ATCC 51484 / DSM 6875 / VKM B-1610 / KT).